Consider the following 89-residue polypeptide: Small ribosomal subunit protein uS15 (89 aa).

This sequence belongs to the universal ribosomal protein uS15 family. As to quaternary structure, part of the 30S ribosomal subunit. Forms a bridge to the 50S subunit in the 70S ribosome, contacting the 23S rRNA.

In terms of biological role, one of the primary rRNA binding proteins, it binds directly to 16S rRNA where it helps nucleate assembly of the platform of the 30S subunit by binding and bridging several RNA helices of the 16S rRNA. Its function is as follows. Forms an intersubunit bridge (bridge B4) with the 23S rRNA of the 50S subunit in the ribosome. The polypeptide is Small ribosomal subunit protein uS15 (Leuconostoc citreum (strain KM20)).